Here is a 316-residue protein sequence, read N- to C-terminus: tRNA dimethylallyltransferase (316 aa).

Residue G17–T24 participates in ATP binding. T19 to T24 contributes to the substrate binding site. 4 interaction with substrate tRNA regions span residues D42–L45, Q166–R170, R247–R252, and K280–R287.

Belongs to the IPP transferase family. As to quaternary structure, monomer. The cofactor is Mg(2+).

It catalyses the reaction adenosine(37) in tRNA + dimethylallyl diphosphate = N(6)-dimethylallyladenosine(37) in tRNA + diphosphate. In terms of biological role, catalyzes the transfer of a dimethylallyl group onto the adenine at position 37 in tRNAs that read codons beginning with uridine, leading to the formation of N6-(dimethylallyl)adenosine (i(6)A). In Escherichia fergusonii (strain ATCC 35469 / DSM 13698 / CCUG 18766 / IAM 14443 / JCM 21226 / LMG 7866 / NBRC 102419 / NCTC 12128 / CDC 0568-73), this protein is tRNA dimethylallyltransferase.